The sequence spans 275 residues: Dermonecrotic toxin LamSicTox-alphaIV1ii (275 aa).

Residue His-5 is part of the active site. The Mg(2+) site is built by Glu-25 and Asp-27. His-41 (nucleophile) is an active-site residue. 2 cysteine pairs are disulfide-bonded: Cys-45–Cys-51 and Cys-47–Cys-192. A Mg(2+)-binding site is contributed by Asp-85.

The protein belongs to the arthropod phospholipase D family. Class II subfamily. Mg(2+) is required as a cofactor. Expressed by the venom gland.

It is found in the secreted. It catalyses the reaction an N-(acyl)-sphingosylphosphocholine = an N-(acyl)-sphingosyl-1,3-cyclic phosphate + choline. The catalysed reaction is an N-(acyl)-sphingosylphosphoethanolamine = an N-(acyl)-sphingosyl-1,3-cyclic phosphate + ethanolamine. The enzyme catalyses a 1-acyl-sn-glycero-3-phosphocholine = a 1-acyl-sn-glycero-2,3-cyclic phosphate + choline. It carries out the reaction a 1-acyl-sn-glycero-3-phosphoethanolamine = a 1-acyl-sn-glycero-2,3-cyclic phosphate + ethanolamine. In terms of biological role, dermonecrotic toxins cleave the phosphodiester linkage between the phosphate and headgroup of certain phospholipids (sphingolipid and lysolipid substrates), forming an alcohol (often choline) and a cyclic phosphate. This toxin acts on sphingomyelin (SM). It may also act on ceramide phosphoethanolamine (CPE), lysophosphatidylcholine (LPC) and lysophosphatidylethanolamine (LPE), but not on lysophosphatidylserine (LPS), and lysophosphatidylglycerol (LPG). It acts by transphosphatidylation, releasing exclusively cyclic phosphate products as second products. Induces dermonecrosis, hemolysis, increased vascular permeability, edema, inflammatory response, and platelet aggregation. In Loxosceles amazonica (Recluse spider), this protein is Dermonecrotic toxin LamSicTox-alphaIV1ii.